A 323-amino-acid polypeptide reads, in one-letter code: Beta-ketoacyl-[acyl-carrier-protein] synthase III (323 aa).

Catalysis depends on residues C113 and H250. The tract at residues 251 to 255 is ACP-binding; the sequence is QANRR. N280 is a catalytic residue.

The protein belongs to the thiolase-like superfamily. FabH family. As to quaternary structure, homodimer.

The protein resides in the cytoplasm. The enzyme catalyses malonyl-[ACP] + acetyl-CoA + H(+) = 3-oxobutanoyl-[ACP] + CO2 + CoA. It functions in the pathway lipid metabolism; fatty acid biosynthesis. Functionally, catalyzes the condensation reaction of fatty acid synthesis by the addition to an acyl acceptor of two carbons from malonyl-ACP. Catalyzes the first condensation reaction which initiates fatty acid synthesis and may therefore play a role in governing the total rate of fatty acid production. Possesses both acetoacetyl-ACP synthase and acetyl transacylase activities. Its substrate specificity determines the biosynthesis of branched-chain and/or straight-chain of fatty acids. The protein is Beta-ketoacyl-[acyl-carrier-protein] synthase III of Sinorhizobium medicae (strain WSM419) (Ensifer medicae).